Consider the following 325-residue polypeptide: Zinc finger C2HC domain-containing protein 1A (325 aa).

Residues 15-44 (ELLPCKICGRTFFPVALKKHGPICQKTATK) form a C2HC/C3H-type 1 zinc finger. Residues Cys19, Cys22, His34, and Cys38 each coordinate Zn(2+). The tract at residues 43–83 (TKKRKTFDSSRQRAEGTDIPTVKPLKPRPEPPKKPSNWRRK) is disordered. The segment covering 48–58 (TFDSSRQRAEG) has biased composition (basic and acidic residues). The C2HC/C3H-type 2 zinc finger occupies 118-147 (DYIQCPYCQRRFNENAADRHINFCKEQAAR). 4 residues coordinate Zn(2+): Cys122, Cys125, His137, and Cys141. Residues 150 to 260 (NKGKFSTDTK…NPAPGVLTNK (111 aa)) are disordered. 2 stretches are compositionally biased toward low complexity: residues 177 to 188 (SNSPGTASSGSS) and 197 to 216 (GKTV…SSLG). Ser223 is modified (phosphoserine). Thr244 bears the Phosphothreonine mark. Ser292 bears the Phosphoserine mark.

It belongs to the ZC2HC1 family. It depends on Zn(2+) as a cofactor.

This chain is Zinc finger C2HC domain-containing protein 1A (ZC2HC1A), found in Homo sapiens (Human).